The primary structure comprises 161 residues: Transcription elongation factor GreA (161 aa).

The stretch at 43–68 (SENAEYEAAREKQAFVEARIKHLEDI) forms a coiled coil.

It belongs to the GreA/GreB family.

Its function is as follows. Necessary for efficient RNA polymerase transcription elongation past template-encoded arresting sites. The arresting sites in DNA have the property of trapping a certain fraction of elongating RNA polymerases that pass through, resulting in locked ternary complexes. Cleavage of the nascent transcript by cleavage factors such as GreA or GreB allows the resumption of elongation from the new 3'terminus. GreA releases sequences of 2 to 3 nucleotides. The sequence is that of Transcription elongation factor GreA from Rickettsia bellii (strain OSU 85-389).